A 120-amino-acid chain; its full sequence is Small ribosomal subunit protein uS13 (120 aa).

Residues 93–120 (RKGLPVRGQTTKNNARTRKGKKKTVGSK) are disordered. Residues 107-120 (ARTRKGKKKTVGSK) show a composition bias toward basic residues.

Belongs to the universal ribosomal protein uS13 family. Part of the 30S ribosomal subunit. Forms a loose heterodimer with protein S19. Forms two bridges to the 50S subunit in the 70S ribosome.

Located at the top of the head of the 30S subunit, it contacts several helices of the 16S rRNA. In the 70S ribosome it contacts the 23S rRNA (bridge B1a) and protein L5 of the 50S subunit (bridge B1b), connecting the 2 subunits; these bridges are implicated in subunit movement. Contacts the tRNAs in the A and P-sites. The sequence is that of Small ribosomal subunit protein uS13 from Helicobacter acinonychis (strain Sheeba).